Reading from the N-terminus, the 507-residue chain is Cytochrome P450 4A14 (507 aa).

The propeptide at 1–4 is removed in mature form; the sequence is MGFS. Glu-318 is a binding site for heme. Ser-437 carries the phosphoserine modification. Cys-454 lines the heme pocket.

This sequence belongs to the cytochrome P450 family. Requires heme as cofactor.

It is found in the endoplasmic reticulum membrane. The protein localises to the microsome membrane. The enzyme catalyses an omega-methyl-long-chain fatty acid + reduced [NADPH--hemoprotein reductase] + O2 = an omega-hydroxy-long-chain fatty acid + oxidized [NADPH--hemoprotein reductase] + H2O + H(+). It carries out the reaction dodecanoate + reduced [NADPH--hemoprotein reductase] + O2 = (11R)-hydroxydodecanoate + oxidized [NADPH--hemoprotein reductase] + H2O + H(+). It catalyses the reaction dodecanoate + reduced [NADPH--hemoprotein reductase] + O2 = 12-hydroxydodecanoate + oxidized [NADPH--hemoprotein reductase] + H2O + H(+). The catalysed reaction is tetradecanoate + reduced [NADPH--hemoprotein reductase] + O2 = 14-hydroxytetradecanoate + oxidized [NADPH--hemoprotein reductase] + H2O + H(+). It functions in the pathway lipid metabolism; fatty acid metabolism. Its function is as follows. A cytochrome P450 monooxygenase that catalyzes omega and omega-1 hydroxylation of saturated fatty acids. Exhibits preferential omega versus omega-1 regioselectivity and (R) versus (S) stereoselectivity for hydroxylation of dodecanoic (lauric) acid. Mechanistically, uses molecular oxygen inserting one oxygen atom into a substrate, and reducing the second into a water molecule, with two electrons provided by NADPH via cytochrome P450 reductase (CPR; NADPH-ferrihemoprotein reductase). This Rattus norvegicus (Rat) protein is Cytochrome P450 4A14.